The sequence spans 126 residues: uncharacterized protein (126 aa).

A signal peptide spans 1 to 23 (MLKKLIMGFFLLILLGIAGVAVM).

This is an uncharacterized protein from Archaeoglobus fulgidus (strain ATCC 49558 / DSM 4304 / JCM 9628 / NBRC 100126 / VC-16).